Here is a 316-residue protein sequence, read N- to C-terminus: UDP-3-O-acylglucosamine N-acyltransferase 2 (316 aa).

The active-site Proton acceptor is histidine 230.

The protein belongs to the transferase hexapeptide repeat family. LpxD subfamily. Homotrimer.

The catalysed reaction is a UDP-3-O-[(3R)-3-hydroxyacyl]-alpha-D-glucosamine + a (3R)-hydroxyacyl-[ACP] = a UDP-2-N,3-O-bis[(3R)-3-hydroxyacyl]-alpha-D-glucosamine + holo-[ACP] + H(+). The protein operates within bacterial outer membrane biogenesis; LPS lipid A biosynthesis. Its function is as follows. Catalyzes the N-acylation of UDP-3-O-acylglucosamine using 3-hydroxyacyl-ACP as the acyl donor. Is involved in the biosynthesis of lipid A, a phosphorylated glycolipid that anchors the lipopolysaccharide to the outer membrane of the cell. This chain is UDP-3-O-acylglucosamine N-acyltransferase 2, found in Sulfurimonas denitrificans (strain ATCC 33889 / DSM 1251) (Thiomicrospira denitrificans (strain ATCC 33889 / DSM 1251)).